A 185-amino-acid polypeptide reads, in one-letter code: uncharacterized protein (185 aa).

The interval 160-185 (QYTGPAVPSVPTTNLNDIGDPTKTVQ) is disordered.

This is an uncharacterized protein from Saccharomyces cerevisiae (strain ATCC 204508 / S288c) (Baker's yeast).